Consider the following 574-residue polypeptide: GRB2-associated-binding protein 4 (574 aa).

Positions 1–33 are disordered; sequence MSLPSPSPSRELCPPDPAFAPLSSWPGSGPAGG. The 114-residue stretch at 39-152 folds into the PH domain; the sequence is HVLYSGWLRK…WVQSICQICG (114 aa). Disordered stretches follow at residues 176–200, 215–234, 293–331, and 418–513; these read PAEP…PVSH, LRSH…ASFS, SLAS…RPAE, and PPVN…PRST. Over residues 181 to 193 the composition is skewed to polar residues; it reads CSHQHLPQEQEPT. Polar residues-rich tracts occupy residues 302–318 and 424–442; these read GSLT…SGKY and LKPN…NNRV. Residues 457–478 show a composition bias toward low complexity; sequence SGTSHTFDSSSSQHPISTQSIT. Residues 502 to 513 are compositionally biased toward polar residues; it reads GGTSSSAPPRST.

The protein belongs to the GAB family.

This chain is GRB2-associated-binding protein 4 (GAB4), found in Homo sapiens (Human).